Consider the following 120-residue polypeptide: Large ribosomal subunit protein bL20 (120 aa).

This sequence belongs to the bacterial ribosomal protein bL20 family.

In terms of biological role, binds directly to 23S ribosomal RNA and is necessary for the in vitro assembly process of the 50S ribosomal subunit. It is not involved in the protein synthesizing functions of that subunit. The polypeptide is Large ribosomal subunit protein bL20 (Cereibacter sphaeroides (strain ATCC 17025 / ATH 2.4.3) (Rhodobacter sphaeroides)).